A 171-amino-acid chain; its full sequence is Adenine phosphoribosyltransferase (171 aa).

The protein belongs to the purine/pyrimidine phosphoribosyltransferase family. As to quaternary structure, homodimer.

It localises to the cytoplasm. It carries out the reaction AMP + diphosphate = 5-phospho-alpha-D-ribose 1-diphosphate + adenine. It functions in the pathway purine metabolism; AMP biosynthesis via salvage pathway; AMP from adenine: step 1/1. Its function is as follows. Catalyzes a salvage reaction resulting in the formation of AMP, that is energically less costly than de novo synthesis. The polypeptide is Adenine phosphoribosyltransferase (Mycoplasmopsis fermentans (strain ATCC 19989 / NBRC 14854 / NCTC 10117 / PG18) (Mycoplasma fermentans)).